The primary structure comprises 465 residues: Neuromedin-K receptor (465 aa).

Over 1 to 84 the chain is Extracellular; it reads MATLPAAETW…TNQFVQPSWR (84 aa). N23, N50, and N73 each carry an N-linked (GlcNAc...) asparagine glycan. Residues 85-107 traverse the membrane as a helical segment; sequence IALWSLAYGVVVAVAVLGNLIVI. Residues 108-117 lie on the Cytoplasmic side of the membrane; it reads WIILAHKRMR. Residues 118–139 form a helical membrane-spanning segment; sequence TVTNYFLVNLAFSDASMAAFNT. Over 140 to 159 the chain is Extracellular; that stretch reads LVNFIYALHSEWYFGANYCR. A disulfide bridge connects residues C158 and C233. A helical transmembrane segment spans residues 160–181; that stretch reads FQNFFPITAVFASIYSMTAIAV. Over 182–201 the chain is Cytoplasmic; sequence DRYMAIIDPLKPRLSATATK. The chain crosses the membrane as a helical span at residues 202-222; that stretch reads IVIGSIWILAFLLAFPQCLYS. The Extracellular portion of the chain corresponds to 223–245; the sequence is KTKVMPGRTLCFVQWPEGPKQHF. Residues 246–270 traverse the membrane as a helical segment; it reads TYHIIVIILVYCFPLLIMGITYTIV. The Cytoplasmic portion of the chain corresponds to 271–299; the sequence is GITLWGGEIPGDTCDKYHEQLKAKRKVVK. A helical membrane pass occupies residues 300-321; that stretch reads MMIIVVMTFAICWLPYHIYFIL. Residues 322–334 lie on the Extracellular side of the membrane; that stretch reads TAIYQQLNRWKYI. Residues 335–359 traverse the membrane as a helical segment; it reads QQVYLASFWLAMSSTMYNPIIYCCL. Residues 360 to 465 are Cytoplasmic-facing; the sequence is NKRFRAGFKR…SPYTSVDEYS (106 aa). A lipid anchor (S-palmitoyl cysteine) is attached at C374. The interval 415 to 465 is disordered; the sequence is PNDADTTRSSRKKRATPRDPSFNGCSRRNSKSASATSSFISSPYTSVDEYS. The segment covering 445–465 has biased composition (low complexity); sequence KSASATSSFISSPYTSVDEYS.

Belongs to the G-protein coupled receptor 1 family. The anchoring of this receptor to the plasma membrane is probably mediated by the palmitoylation of a cysteine residue.

The protein localises to the cell membrane. Its function is as follows. This is a receptor for the tachykinin neuropeptide neuromedin-K (neurokinin B). It is associated with G proteins that activate a phosphatidylinositol-calcium second messenger system. The rank order of affinity of this receptor to tachykinins is: neuromedin-K &gt; substance K &gt; substance P. The polypeptide is Neuromedin-K receptor (TACR3) (Homo sapiens (Human)).